We begin with the raw amino-acid sequence, 202 residues long: MEENNNIYPIFDRMLTRQDKEELLKQRGVMIWFTGLSGSGKSTIAIALERELHKRGLLCRILDGDNIRTGINNNLSFSETDRVENIRRIAEVSKLFIDTGIITIAAFISPNNDIREMAARIVGPDDFLEIFVSTPLAECEKRDVKGLYAKARRGEIKNFTGISAPFEAPEHPALSLDTSVLSLEESVNRLLEIVLPRVSRHE.

35 to 42 (GLSGSGKS) is a binding site for ATP. The active-site Phosphoserine intermediate is the Ser109.

This sequence belongs to the APS kinase family.

It catalyses the reaction adenosine 5'-phosphosulfate + ATP = 3'-phosphoadenylyl sulfate + ADP + H(+). It participates in sulfur metabolism; hydrogen sulfide biosynthesis; sulfite from sulfate: step 2/3. In terms of biological role, catalyzes the synthesis of activated sulfate. This Bacteroides fragilis (strain YCH46) protein is Adenylyl-sulfate kinase.